The primary structure comprises 78 residues: Large ribosomal subunit protein bL28 (78 aa).

The protein belongs to the bacterial ribosomal protein bL28 family.

In Treponema pallidum (strain Nichols), this protein is Large ribosomal subunit protein bL28 (rpmB).